Consider the following 783-residue polypeptide: Putative ATP-dependent DNA helicase fml2 (783 aa).

A Helicase ATP-binding domain is found at 118–286; that stretch reads FCEQALFHNL…KVVDCLHISK (169 aa). An ATP-binding site is contributed by 131-138; the sequence is LPTGLGKT. The DEAH box signature appears at 234 to 237; that stretch reads DEAH. The Helicase C-terminal domain maps to 450–619; sequence KMNHLLELLK…GKKIALKKDV (170 aa).

Belongs to the DEAD box helicase family. DEAH subfamily. FANCM sub-subfamily.

It localises to the nucleus. Its subcellular location is the nucleolus. It catalyses the reaction ATP + H2O = ADP + phosphate + H(+). The sequence is that of Putative ATP-dependent DNA helicase fml2 from Schizosaccharomyces pombe (strain 972 / ATCC 24843) (Fission yeast).